We begin with the raw amino-acid sequence, 312 residues long: MNRTRSDSLAAGGLNWDSLPLRLFAGGNAKFWDPADIDFSRDRADWESLSTMERDWATRLCAEFIAGEEAVTQDIQPFMAAMRAEGRLGDEMYLTQFAFEEAKHTQVFRMWLDAVGITEDLQGYLDDLPAYRQMFYEELPASLDALATDPSPQAQVRASVTYNHVIEGMMALTGYYAWHRICVDRHILPGMQELVRRIGDDERRHMAWGTFTCRRHVAADDANWTVFEDRMNELIPLALQNTDDAFALYDEIPFGLTIEEFQQYAADKGMRRFGTISSARGRPLAEIDVDYTPLHLEDSFADEDRKALAASA.

Residues E68, E101, and H104 each coordinate Mn(2+). A cross-link (3-(O4'-tyrosyl)-valine (Val-Tyr)) is located at residues V71 to Y162. E101 provides a ligand contact to Fe cation. Positions 167, 202, and 205 each coordinate Fe cation.

The protein belongs to the ribonucleoside diphosphate reductase small chain family. R2-like ligand binding oxidase subfamily. As to quaternary structure, homodimer. Requires Fe cation as cofactor. Mn(2+) is required as a cofactor.

In terms of biological role, probable oxidase that might be involved in lipid metabolism. The chain is R2-like ligand binding oxidase from Mycolicibacterium gilvum (strain PYR-GCK) (Mycobacterium gilvum (strain PYR-GCK)).